We begin with the raw amino-acid sequence, 74 residues long: MKKERTESLVAQALKNIGNDRYMLDNLVFVRVKQLNAGAKTLVNMDPKRHKLVDIAIREIAEGKIDIDRIDERN.

This sequence belongs to the RNA polymerase subunit omega family. The RNAP catalytic core consists of 2 alpha, 1 beta, 1 beta' and 1 omega subunit. When a sigma factor is associated with the core the holoenzyme is formed, which can initiate transcription.

It carries out the reaction RNA(n) + a ribonucleoside 5'-triphosphate = RNA(n+1) + diphosphate. In terms of biological role, promotes RNA polymerase assembly. Latches the N- and C-terminal regions of the beta' subunit thereby facilitating its interaction with the beta and alpha subunits. In Helicobacter pylori (strain Shi470), this protein is DNA-directed RNA polymerase subunit omega.